A 310-amino-acid polypeptide reads, in one-letter code: tRNA dimethylallyltransferase (310 aa).

Residue 13–20 (GPTASGKT) coordinates ATP. 15–20 (TASGKT) is a binding site for substrate. 4 interaction with substrate tRNA regions span residues 38–41 (DSAL), 162–166 (QRLSR), 243–248 (RCVGYR), and 276–283 (KRQITWLR).

Belongs to the IPP transferase family. In terms of assembly, monomer. Mg(2+) serves as cofactor.

The enzyme catalyses adenosine(37) in tRNA + dimethylallyl diphosphate = N(6)-dimethylallyladenosine(37) in tRNA + diphosphate. Catalyzes the transfer of a dimethylallyl group onto the adenine at position 37 in tRNAs that read codons beginning with uridine, leading to the formation of N6-(dimethylallyl)adenosine (i(6)A). This chain is tRNA dimethylallyltransferase, found in Aliivibrio fischeri (strain MJ11) (Vibrio fischeri).